Consider the following 957-residue polypeptide: SH3 domain-binding protein 4-A (957 aa).

The SH3 1 domain maps to 54–113 (ENVKEVVAIKDYCPNNFTTLKFSKGEHLYVLDASGGDWWYAHNSTEMGYIPSSYVQPLNY). Positions 312–449 (TSIVCRLDSS…LEPVMYVVMV (138 aa)) constitute a ZU5 domain. The region spanning 649 to 719 (TSLKYGKLLK…HAKNVLVVGK (71 aa)) is the SH3 2 domain.

Homodimer or homooligomer.

It is found in the membrane. Its subcellular location is the clathrin-coated pit. It localises to the cytoplasmic vesicle. The protein resides in the clathrin-coated vesicle. The protein localises to the nucleus. In terms of biological role, possible role in regulating endocytosis of the transferrin receptor at the plasma membrane. Alternatively, may function as a negative regulator of the amino acid-induced TOR signaling by inhibiting the formation of active Rag GTPase complexes. Preferentially binds inactive Rag GTPase complexes and prevents their interaction with the mTORC1 complex inhibiting its relocalization to lysosomes and its activation. Thereby, may indirectly regulate cell growth, proliferation and autophagy. This is SH3 domain-binding protein 4-A (sh3bp4-a) from Xenopus laevis (African clawed frog).